A 1002-amino-acid chain; its full sequence is E3 ubiquitin-protein ligase BRE1B (1002 aa).

The tract at residues 1 to 32 (MSGLSNKRAAGDGGSGPPEKKLNREEKTTTTL) is disordered. A compositionally biased stretch (basic and acidic residues) spans 18–28 (PEKKLNREEKT). Lys-20 is modified (N6-acetyllysine). A Phosphoserine modification is found at Ser-42. Positions 55 to 91 (KNKKLAERLEQRQACEDELRERIEKLEKRQATDDATL) form a coiled coil. The interval 120 to 148 (SSGTEVPGCQEGLTRDVIPRTDPGTSDLR) is disordered. Coiled coils occupy residues 190-378 (KAAV…LRSL) and 438-526 (LQKK…ASGS). N6-acetyllysine occurs at positions 356 and 518. 2 disordered regions span residues 520–562 (RAQA…PDSK) and 579–652 (KKEE…ESEL). Glycyl lysine isopeptide (Lys-Gly) (interchain with G-Cter in SUMO2) cross-links involve residues Lys-579 and Lys-580. 2 positions are modified to phosphoserine: Ser-585 and Ser-586. 2 stretches are compositionally biased toward basic and acidic residues: residues 603 to 620 (RGREPEARPKRELREREG) and 634 to 652 (RADREKAKAEEARRKESEL). The stretch at 628-947 (AASTLSRADR…EEIKEYKARL (320 aa)) forms a coiled coil. The RING-type zinc-finger motif lies at 949–988 (CPCCNTRKKDAVLTKCFHVFCFECVRGRYEARQRKCPKCN).

Belongs to the BRE1 family. As to quaternary structure, component of the RNF20/40 complex (also known as BRE1 complex) probably composed of 2 copies of RNF20/BRE1A and 2 copies of RNF40/BRE1B. Interacts with UBE2E1/UBCH6. Interacts with RB1 and WAC. May interact with STX1A. As to expression, ubiquitously expressed. Expressed in brain, testis, heart, liver and kidney. Weakly expressed in lung, spleen and skeletal muscle (at protein level).

The protein resides in the nucleus. The catalysed reaction is S-ubiquitinyl-[E2 ubiquitin-conjugating enzyme]-L-cysteine + [acceptor protein]-L-lysine = [E2 ubiquitin-conjugating enzyme]-L-cysteine + N(6)-ubiquitinyl-[acceptor protein]-L-lysine.. It participates in protein modification; protein ubiquitination. Functionally, component of the RNF20/40 E3 ubiquitin-protein ligase complex that mediates monoubiquitination of 'Lys-120' of histone H2B (H2BK120ub1). H2BK120ub1 gives a specific tag for epigenetic transcriptional activation and is also prerequisite for histone H3 'Lys-4' and 'Lys-79' methylation (H3K4me and H3K79me, respectively). It thereby plays a central role in histone code and gene regulation. The RNF20/40 complex forms a H2B ubiquitin ligase complex in cooperation with the E2 enzyme UBE2A or UBE2B; reports about the cooperation with UBE2E1/UBCH are contradictory. Required for transcriptional activation of Hox genes. This chain is E3 ubiquitin-protein ligase BRE1B (Rnf40), found in Rattus norvegicus (Rat).